Here is a 173-residue protein sequence, read N- to C-terminus: Thiol-disulfide oxidoreductase ResA (173 aa).

Residues 10–29 traverse the membrane as a helical; Signal-anchor for type II membrane protein segment; that stretch reads VIILLILCGAVGFTLYQGFF. In terms of domain architecture, Thioredoxin spans 35 to 173; the sequence is MQIGKEAPNF…LEGYLQKITP (139 aa). A disulfide bridge links C73 with C76.

Belongs to the thioredoxin family. ResA subfamily.

It is found in the cell membrane. It functions in the pathway protein modification; cytochrome c assembly. In terms of biological role, thiol-disulfide oxidoreductase which is required in disulfide reduction during c-type cytochrome synthesis. May accept reducing equivalents from CcdA, leading to breakage of disulfide bonds in apocytochrome c; following this reduction heme can be covalently attached. This chain is Thiol-disulfide oxidoreductase ResA, found in Bacillus cereus (strain ZK / E33L).